The following is a 511-amino-acid chain: RNA polymerase principal sigma factor HrdB (511 aa).

The interval 72–186 (SAAEPKRTRK…AATEEPEGTE (115 aa)) is disordered. A compositionally biased stretch (basic residues) spans 78–93 (RTRKSVAAKSPAKRTA). A compositionally biased stretch (low complexity) spans 94–121 (TKAVAAKPVTSRKATAPAAPAAPATEPA). Residues 132–158 (AAAKKTTAKKATAKKTTAKKAAAKKTT) are compositionally biased toward basic residues. The interval 211–347 (TADPVKDYLK…ITRAMADQAR (137 aa)) is binds RNA polymerase-binding protein RbpA. Positions 278–348 (LLEANLRLVV…TRAMADQART (71 aa)) are sigma-70 factor domain-2. The Interaction with polymerase core subunit RpoC motif lies at 302-305 (DLIQ). The tract at residues 357–433 (EVINKLARVQ…DSEAVVPADA (77 aa)) is sigma-70 factor domain-3. The interval 446 to 499 (VLDTLSEREAGVVSMRFGLTDGQPKTLDEIGKVYGVTRERIRQIESKTMSKLRH) is sigma-70 factor domain-4. The segment at residues 472–491 (LDEIGKVYGVTRERIRQIES) is a DNA-binding region (H-T-H motif).

It belongs to the sigma-70 factor family. Homotrimer (Potential). interacts transiently with the RNA polymerase core complex. Interacts with RNA polymerase-binding protein RbpA via its sigma-2 region (residues 211-347) in a free form.

Functionally, sigma factors are initiation factors that promote the attachment of RNA polymerase to specific initiation sites and are then released. This sigma factor is the primary sigma factor during exponential growth. Its activity is stimulated by RbpA. The polypeptide is RNA polymerase principal sigma factor HrdB (hrdB) (Streptomyces coelicolor (strain ATCC BAA-471 / A3(2) / M145)).